A 579-amino-acid chain; its full sequence is MPKTISVRVTTMDAELEFAIQPSTTGKQLFDQVVKTIGLREVWFFGLQYQDTKGFSTWLKLNKKVTAQDVRKESPLLFKFRAKFYPEDVSEELIQEATQRLFFLQVKEGILNDDIYCPPETAVLLASYAVQAKYADYNKDAHTPGYLSNEKLLPQRVLEQHKLNKEQWEERIQVWHEEHKGMLREDSMMEYLKIAQDLEMYGVNYFSIKNKKGSELWLGVDALGLNIYEQNDKMTPKIGFPWSEIRNISFNDKKFVIKPIDKKAPDFVFYAQRLRINKRILALCMGNHELYMRRRKPDTIEVQQMKAQAKEEKNHKKMERALLEDERKKREQAEKEKEKIEKEKEELMERLRVIEEQTRKAQQELEEQTRKALELEQERKRAQEEAERLERERRLAEEAKSALLQQSESQMKNQEHLATELAELTSKISLLEDAKKKKEDEALEWQTKATMVQEDLEKTKEELKNKVMSSHVTEPVHGENDNDEGDESSAEASAELTSAAAYKDRSEEERMTEAEKNERVQKHLLALTSELANARDETKKTQNDIIHAENVRAGRDKYKTLRQIRSGNTKQRIDEFECM.

Residues 5–295 enclose the FERM domain; the sequence is ISVRVTTMDA…GNHELYMRRR (291 aa). A coiled-coil region spans residues 306 to 448; it reads KAQAKEEKNH…EDEALEWQTK (143 aa). 3 disordered regions span residues 308–341, 376–418, and 464–519; these read QAKEEKNHKKMERALLEDERKKREQAEKEKEKIE, EQER…EHLA, and KNKV…KNER. Residues 376–400 show a composition bias toward basic and acidic residues; the sequence is EQERKRAQEEAERLERERRLAEEAK. Over residues 490–501 the composition is skewed to low complexity; it reads AEASAELTSAAA. Over residues 502–519 the composition is skewed to basic and acidic residues; sequence YKDRSEEERMTEAEKNER. Residues 517-551 adopt a coiled-coil conformation; the sequence is NERVQKHLLALTSELANARDETKKTQNDIIHAENV.

The protein localises to the cell membrane. It localises to the cell junction. Positively regulates endothelial adherens junction formation and stabilization. Is thereby required for intersegmental vessel luminal membrane formation and stabilization during tubulogenesis in the early stages of development, independent of blood flow dynamics. In Danio rerio (Zebrafish), this protein is Moesin a.